The following is a 377-amino-acid chain: tRNA(Met) cytidine acetate ligase (377 aa).

ATP-binding positions include 7 to 20 (ITEY…HLFH), G100, N153, and R178.

The protein belongs to the TmcAL family.

Its subcellular location is the cytoplasm. It carries out the reaction cytidine(34) in elongator tRNA(Met) + acetate + ATP = N(4)-acetylcytidine(34) in elongator tRNA(Met) + AMP + diphosphate. In terms of biological role, catalyzes the formation of N(4)-acetylcytidine (ac(4)C) at the wobble position of elongator tRNA(Met), using acetate and ATP as substrates. First activates an acetate ion to form acetyladenylate (Ac-AMP) and then transfers the acetyl group to tRNA to form ac(4)C34. This Staphylococcus epidermidis (strain ATCC 35984 / DSM 28319 / BCRC 17069 / CCUG 31568 / BM 3577 / RP62A) protein is tRNA(Met) cytidine acetate ligase.